We begin with the raw amino-acid sequence, 154 residues long: CASP-like protein 5B3 (154 aa).

Over M1–R17 the chain is Cytoplasmic. Residues V18 to S38 traverse the membrane as a helical segment. The N-linked (GlcNAc...) asparagine glycan is linked to N39. Residues N39 to A42 lie on the Extracellular side of the membrane. Residues F43–L63 traverse the membrane as a helical segment. Over D64–P77 the chain is Cytoplasmic. A helical transmembrane segment spans residues V78–A98. The Extracellular segment spans residues S99–S129. Residues V130 to L150 traverse the membrane as a helical segment. Residues L151–L154 lie on the Cytoplasmic side of the membrane.

This sequence belongs to the Casparian strip membrane proteins (CASP) family. In terms of assembly, homodimer and heterodimers.

The protein localises to the cell membrane. This chain is CASP-like protein 5B3, found in Oryza sativa subsp. indica (Rice).